A 396-amino-acid polypeptide reads, in one-letter code: S-adenosylmethionine synthase (396 aa).

Position 16 (His-16) interacts with ATP. Mg(2+) is bound at residue Asp-18. Glu-44 contacts K(+). L-methionine contacts are provided by Glu-57 and Gln-100. The flexible loop stretch occupies residues Gln-100–Arg-110. Residues Asp-165–Lys-167, Lys-231–Phe-232, Asp-240, Arg-246–Lys-247, Ala-263, and Lys-267 each bind ATP. Asp-240 is an L-methionine binding site. L-methionine is bound at residue Lys-271.

The protein belongs to the AdoMet synthase family. In terms of assembly, homotetramer; dimer of dimers. It depends on Mg(2+) as a cofactor. K(+) is required as a cofactor.

Its subcellular location is the cytoplasm. The catalysed reaction is L-methionine + ATP + H2O = S-adenosyl-L-methionine + phosphate + diphosphate. It functions in the pathway amino-acid biosynthesis; S-adenosyl-L-methionine biosynthesis; S-adenosyl-L-methionine from L-methionine: step 1/1. Catalyzes the formation of S-adenosylmethionine (AdoMet) from methionine and ATP. The overall synthetic reaction is composed of two sequential steps, AdoMet formation and the subsequent tripolyphosphate hydrolysis which occurs prior to release of AdoMet from the enzyme. The polypeptide is S-adenosylmethionine synthase (Azotobacter vinelandii (strain DJ / ATCC BAA-1303)).